The following is a 2947-amino-acid chain: MASVGCSLRSASTSATNGPSLAGLCAKVDLYLGCSRCTQCLNESTYILREVEHTCPREILLARFKQAAESKIWRKVGRRPSFPTPMRYQVCHYYRPGLGCRRHWNRCTFARSPEEALVWTFELKNNLPRLKLKEAVQGTRAPDRLQTPADTIRAEFGGHFQLLCAICFTCCPPCLCPVDPRGHCPKHQICPTLLIHVIVEGLKRQFVEVRPLPQRRHPLNYCMYVGRGVPCRHGASRCEYAHSAVEMAVWKAEQLDGLQRGDLLTYPLFGENKWKASPNPNPPVTKLYCHACLVTCNSQEAFENHCSSLEHAQMVAFDQAVPWKHRAPPMGLSKFDLCPRPDLCEHGEVCIKAHSKQELQEWVQRAQDMELREQAAWQDGLVPYQARLLAEYQRSSKEVSVMAETIRGVSVTCHPPPVHQAQEKIQHQWVFTIHSEDPLLHVALLNQEPGAAFSLVAPSLPPHQLYAQGKHFCVQSSPAQYKVGVLVQAVAFGSFEQWVVFDFGRRPVLLQKLKLQLGQTHSQGLNGKPAPSHPQELECWHTGNRHVVLEVDWTPEQEALMAKYKLPSLALEFNQIVPDWGPISRSNYRQRMHKFLYEEEAAQQQLVAKLAMKGQVSLKTALETPALGMLFAPPGALYAKVPFHSSLLPDTDQGFLLSRAVSTALVAPVPAPNSTVYQVRLEARASSDHALWLLLPARCCMALGLQAQDSPILEVQFQIDPMTFRFWHQAVDALLEEHLVVPDLPACTLPHPWPTPPSFRGNHKQKLAVGLIAGRRPEGTKHIPPLLIYGPFGTGKTYTLAMAALEVVQQPHTKVLICTHTNSAADIYIREYFHDYVSSGHPEATPLRVMYADRPPRQTDPTTLQYCCLTEDRQAFRPPTGPELVHHRLVVTTTSQARELQVPAGFFSHIFIDEAAQMLECEALIPLSYALSLTRVVLAGDHMQVTPRLFSVPRDKSARHTLLHRLFLYYQQEAHKIAQQSRIIFHENYRSTAAIINFVSHHFYLAKGNPIQASGKVPRHPQHYPLMFCHVAGSPEQDMSMTSWLNSAEVTQVVEKVREIYNTWPHCWGPREQRHICAVSHGAQVSALRQELRRRNLGEVSVGSFEILPGREFRVVVLSSVHNRNSLLSPGAPTSEFFTEPRVLNTVMTRAQSQLVAVGDAVALCSSGACRNLWRSFIRECIEHHSAFPEELSLEQIEQGVAQRQNWASLTLKARGPETEQKSMAQGPQRLIAEGTMVTVKAETRAEAAAKAQTAAVAAEDTASGNSASRDAAAEVSTLEGGMSEEDSESDFWPSDWELNADDAILKELLDESQQVTVTVREDGLLDTVVCSAPQKAREYTNLPSSVLWKFLRSNSKQFRRCSFLQETFERALATPLDDMASSPIQVRGRLNCGMAFTGDEVLVQILGPAGDDRCVPGSLQGRVMGVLKRRRHELAFVCRMDEWDPRIMIPINGSVTKIFVAEMKDPQQVPIHRLIQGQVQRVRHETLKPEDRSTRLFWVRIVLWRERFYYPLGIVLEVLPKAITWEQGLYILDLEHGLKAHTPDPASVSKALQRYRSELNTAAGHREDYRHFLTFTVDPQGACNLDDALSVRDLGPVYEVAVHIADVASLVPKDGALDVEARQQGTVFYAPNREPVLMLPASLCQDALSLLPGQDRLAISLFLTMEKGGGQIKSLRFAPSIIRSDRQLSYEEAEELIKRHPGAGLELPAHLDSVEACVVAACYFSWMLRRQRLSAACYYEPPDEDSVLGFRTAHIMVQEYMIQFNSHVAEFLVSNKHTQTLTPLRWQPTPSRQQLDSVFKKYRGLVPLSLHLCHHSNTDYTPNKQLHLLTSLWKQVQLAAGTQDYSQMVDLIAADDMHPSLAPACLDLRRALGRSVFGRSSQGKQQPAVHHSLQVDWYTWATSPIRRYLDVVLQRLILLALGHRGSTYSNRDIDGLCLDFSRQYASAQSYQRRAYSLHLAIQLKSQPQNKLGFVVDVEMGARCFKVLFPINRETLPDPCPIHYHSLQLAEHPQELVSQTGVRLVWRRRMYSVQASKLPLPLLGTSLDPHTQTVDAALWMKLLMLLKEQRWPEIAALIQEQDKRFHPREKVKIHQSRCGHFVEVVYELGSGDTLQVQLGSSLQRGFLAPTLKLWTVVPGFSLCLEHMERPGDCFSSHVHQALQDQYLQVGEYSGAWGPRCALESLTNAVTENDSIVLHDVHISWDTSQGQLQGTFQLEAAFLQEKCINIHFGCCYLCIRLEGLPLPLDSSLPGPSGLGPFLNIDPNTYTWVAHGLSGDWDHELAGGDWDQENVDDRQEAPKQVYFLIHHMTMEKVPEEVLRPSARFTVEVLSKQLPDLRKEEAVRQLKTASPLVISIALGLPIPEIRWPISGPRRLVSELRWPIPGPRRPVSEPHRPMSGPCGPISEPCRSIPEPCRGNWPRQHSFHKASTSRFLERQNYNIPAGHHKLNQSQDRAVRSALQKQFTVIQGPPGTGKTVVGFHIVYWFHRSNQEQMPTDSSPSGEEQLGGPCVLYCGPSNKSVDVLGGLLLRRKTEMKPLRVYGEQAEATEFPLPGVSNRSLFGKTSQEGRPNQSLRSITLHHRIRQAPNPYAAEIRKFDAQLREGKIFSKEDLRVYRRVLGKARKHELERHSVILCTCSCAASKSLKILNVRQILIDEAGMATEPETLIPLVCFSKTVEKVVLLGDHKQLRPVVKSEQLQSLGMDRSLFERYHRDAIMLDTQYRMHKDICSFPSVEFYGGKLKTWSDLRRLPSILGHTGKPSCSVIFGSVQGHEQKLLVSTEDGNENSRANPEEVTQVVRIIKQLTLDRTVDPKDIAVLTPYNAQAAAISRGLMQRGVTGVTVTSITKSQGSEWRYVIVSTVRTCPRSDVDQRPTKSWLKKFLGFVVDPHQVNVAITRAQEALCIIGDHLLLRCCPLWHRLLDFCEAQHSLVSAEKVRVQRKSALSS.

The C3H1-type 1 zinc-finger motif lies at 85–114 (PMRYQVCHYYRPGLGCRRHWNRCTFARSPE). A C2H2-type zinc finger spans residues 167–187 (CFTCCPPCLCPVDPRGHCPKH). The segment at 221–245 (YCMYVGRGVPCRHGASRCEYAHSAV) adopts a C3H1-type 2 zinc-finger fold. Residues 289–311 (CHACLVTCNSQEAFENHCSSLEH) form a C2H2-type; atypical zinc finger. Residues 769–1317 (VGLIAGRRPE…ELLDESQQVT (549 aa)) enclose the UvrD-like helicase ATP-binding domain. 790 to 797 (GPFGTGKT) contributes to the ATP binding site. The interval 809–1290 (QQPHTKVLIC…GGMSEEDSES (482 aa)) is interaction with THRAP3. The DEAA box motif lies at 913–916 (DEAA). Residues 1260-1292 (EDTASGNSASRDAAAEVSTLEGGMSEEDSESDF) form a disordered region. Short sequence motifs (LXXLL motif) lie at residues 1306–1310 (LKELL), 1348–1352 (LWKFL), 1403–1407 (LVQIL), and 2240–2244 (LEGLP). R2381 carries the post-translational modification Omega-N-methylarginine. An interaction with THRAP3 region spans residues 2413–2947 (PEPCRGNWPR…RVQRKSALSS (535 aa)). In terms of domain architecture, UvrD-like helicase ATP-binding 2 spans 2449 to 2726 (LNQSQDRAVR…IMLDTQYRMH (278 aa)). Residue 2470 to 2477 (GPPGTGKT) participates in ATP binding. An LXXLL motif 5 motif is present at residues 2525–2529 (LGGLL).

This sequence belongs to the DNA2/NAM7 helicase family. In terms of assembly, interacts with PPARA (via DNA-binding domain) and PPARG; the interaction stimulates the transcriptional activity of PPARA and PPARG. Interacts with THRAP3; the interaction is direct and HELZ2 and THRAP3 synergistically enhance the transcriptional activity of PPARG. It is probably part of the peroxisome proliferator activated receptor alpha interacting complex (PRIC).

It localises to the cytoplasm. It carries out the reaction Exonucleolytic cleavage in the 3'- to 5'-direction to yield nucleoside 5'-phosphates.. It catalyses the reaction ATP + H2O = ADP + phosphate + H(+). Its function is as follows. Can degrade highly structured RNAs through its concerted ATP-dependent RNA helicase and 3' to 5' exoribonuclease activities. Shows a strong preference for pyrimidine over purine residues for its nuclease activity. Acts as a transcriptional coactivator for a number of nuclear receptors including PPARA, PPARG, THRA, THRB and RXRA. This is 3'-5' exoribonuclease HELZ2 (Helz2) from Mus musculus (Mouse).